The chain runs to 217 residues: Imidazole glycerol phosphate synthase subunit HisH (217 aa).

Positions 3–217 (SVAVIDYGMG…FLRWEPWSSR (215 aa)) constitute a Glutamine amidotransferase type-1 domain. Cysteine 82 functions as the Nucleophile in the catalytic mechanism. Active-site residues include histidine 193 and glutamate 195.

In terms of assembly, heterodimer of HisH and HisF.

It is found in the cytoplasm. The enzyme catalyses 5-[(5-phospho-1-deoxy-D-ribulos-1-ylimino)methylamino]-1-(5-phospho-beta-D-ribosyl)imidazole-4-carboxamide + L-glutamine = D-erythro-1-(imidazol-4-yl)glycerol 3-phosphate + 5-amino-1-(5-phospho-beta-D-ribosyl)imidazole-4-carboxamide + L-glutamate + H(+). The catalysed reaction is L-glutamine + H2O = L-glutamate + NH4(+). It functions in the pathway amino-acid biosynthesis; L-histidine biosynthesis; L-histidine from 5-phospho-alpha-D-ribose 1-diphosphate: step 5/9. IGPS catalyzes the conversion of PRFAR and glutamine to IGP, AICAR and glutamate. The HisH subunit catalyzes the hydrolysis of glutamine to glutamate and ammonia as part of the synthesis of IGP and AICAR. The resulting ammonia molecule is channeled to the active site of HisF. This is Imidazole glycerol phosphate synthase subunit HisH from Methylococcus capsulatus (strain ATCC 33009 / NCIMB 11132 / Bath).